The primary structure comprises 239 residues: tRNA1(Val) (adenine(37)-N6)-methyltransferase (239 aa).

The protein belongs to the methyltransferase superfamily. tRNA (adenine-N(6)-)-methyltransferase family.

It is found in the cytoplasm. It catalyses the reaction adenosine(37) in tRNA1(Val) + S-adenosyl-L-methionine = N(6)-methyladenosine(37) in tRNA1(Val) + S-adenosyl-L-homocysteine + H(+). Specifically methylates the adenine in position 37 of tRNA(1)(Val) (anticodon cmo5UAC). This Vibrio parahaemolyticus serotype O3:K6 (strain RIMD 2210633) protein is tRNA1(Val) (adenine(37)-N6)-methyltransferase.